The sequence spans 2066 residues: Kinesin-like protein KIN-12C (2066 aa).

2 disordered regions span residues 1–41 and 59–116; these read MSRN…SQIQ and RAQH…RVSL. A compositionally biased stretch (low complexity) spans 20 to 33; the sequence is SLSLFSPSRPPLNS. Residues 67 to 76 show a composition bias toward basic and acidic residues; it reads GPEKKFEVLE. The segment covering 99–109 has biased composition (polar residues); sequence EPNSAQSTPTR. In terms of domain architecture, Kinesin motor spans 168 to 505; sequence NVQVLIRLRP…LKFAQRAKLI (338 aa). 249-256 is a binding site for ATP; that stretch reads GQTGSGKT. 3 microtubules-binding regions span residues 375–379, 406–412, and 454–458; these read SSRSH, VDLAGSE, and HVPYR. Coiled-coil stretches lie at residues 1521–1618 and 1650–1772; these read DLKT…VDEI and KIYA…EILL. Disordered regions lie at residues 1803–1823 and 2043–2066; these read SAAE…RGSS and KYRK…TRYR. Residues 1905-2051 adopt a coiled-coil conformation; that stretch reads VQRVVEKAQQ…AKYRKTSNNH (147 aa). Residues 2047–2066 show a composition bias toward polar residues; that stretch reads TSNNHPSTRTQGQSSGTRYR.

Belongs to the TRAFAC class myosin-kinesin ATPase superfamily. Kinesin family. KIN-12 subfamily. In terms of assembly, interacts with TAN. Interacts with RANGAP1. Expressed in tissues enriched in dividing cells, such as root meristems, root primordia, and leaf primordia/young leaves.

The protein resides in the cytoplasm. Its subcellular location is the cytoskeleton. The protein localises to the phragmoplast. In terms of biological role, involved in the spatial control of cytokinesis by a proper phragmoplast guidance. Localizes TAN to the cortical division sites (CDS) during cytokinesis via direct binding. The protein is Kinesin-like protein KIN-12C of Arabidopsis thaliana (Mouse-ear cress).